A 1219-amino-acid polypeptide reads, in one-letter code: FK506-binding protein 15 (1219 aa).

M1 bears the N-acetylmethionine mark. S14 and S23 each carry phosphoserine. The segment at 41–66 (YTAPKQPKKGQGTAATGNQATPKTAP) is disordered. Over residues 53–66 (TAATGNQATPKTAP) the composition is skewed to polar residues. The segment at 72–169 (PTILVATAVH…AVEFNKQVCI (98 aa)) is important for function in growth cone organization. K92 is subject to N6-acetyllysine. The 94-residue stretch at 197–290 (GDSLEVAYTG…VFEVEVRRVK (94 aa)) folds into the PPIase FKBP-type domain. Residues 294-349 (DSGSDGHSVSSRDSAAPSPIPGADNLSADPVVSPPTSIPFKSGEPALRTKSNSLSE) are disordered. Phosphoserine is present on residues S307, S311, S326, S344, S346, and S356. The interval 381 to 433 (PQLDSNDSEIEDVNTLQGGGQPVVTPSVQPSLHPAHPALPQMTSQAPQPSVTG) is disordered. The segment covering 421-433 (QMTSQAPQPSVTG) has biased composition (polar residues). Coiled coils occupy residues 522-789 (AVSK…TDQA), 818-878 (DEHL…GVEA), and 925-951 (TLQLLNQQEQEKEESSSEEEEEKAEER). A Phosphoserine modification is found at S619. The segment at 739–761 (LEKNLSERKKKSAQERSQAEEEI) is disordered. The segment at 931–1219 (QQEQEKEESS…DDDDDIDWLG (289 aa)) is disordered. A phosphoserine mark is found at S939, S940, S941, and S956. The segment covering 957 to 971 (QEQSASASSGQPQAP) has biased composition (low complexity). 6 positions are modified to phosphoserine: S979, S1024, S1056, S1061, S1065, and S1097. Residues 1090–1100 (QESSTRLSLTS) show a composition bias toward polar residues. T1099 carries the phosphothreonine modification. S1114 bears the Phosphoserine mark. The segment covering 1123–1139 (LKKDDVTSSTGPHKELS) has biased composition (basic and acidic residues). Residues S1158, S1161, S1162, S1164, and S1195 each carry the phosphoserine modification. At T1203 the chain carries Phosphothreonine. Over residues 1207 to 1219 (GDDDDDDDIDWLG) the composition is skewed to acidic residues.

Belongs to the FKBP-type PPIase family. In terms of assembly, interacts with WIP and actin. Interacts with TBC1D23.

The protein resides in the cytoplasm. It localises to the cell projection. Its subcellular location is the axon. It is found in the early endosome. In terms of biological role, may be involved in the cytoskeletal organization of neuronal growth cones. Seems to be inactive as a PPIase. Involved in the transport of early endosomes at the level of transition between microfilament-based and microtubule-based movement. The sequence is that of FK506-binding protein 15 (FKBP15) from Homo sapiens (Human).